A 452-amino-acid chain; its full sequence is 1,3-beta-glucanosyltransferase gel1 (452 aa).

Residues 1–19 (MKASAVTAALAVGASTVLA) form the signal peptide. An intrachain disulfide couples cysteine 71 to cysteine 100. The (1,3-beta-D-glucosyl)n site is built by tyrosine 89, asparagine 159, glutamate 160, aspartate 201, and arginine 206. The Proton donor role is filled by glutamate 160. 2 cysteine pairs are disulfide-bonded: cysteine 215–cysteine 345 and cysteine 233–cysteine 264. A glycan (N-linked (GlcNAc...) asparagine) is linked at asparagine 249. Catalysis depends on glutamate 261, which acts as the Nucleophile. Tyrosine 292 contributes to the (1,3-beta-D-glucosyl)n binding site. Positions 325–340 (EKTSNPSGDGNYNKTG) are enriched in polar residues. Residues 325–419 (EKTSNPSGDG…SGTSTSSKGA (95 aa)) form a disordered region. Asparagine 337 carries N-linked (GlcNAc...) asparagine glycosylation. A compositionally biased stretch (low complexity) spans 393 to 419 (STATAEPGSGSATGSSSSGTSTSSKGA). A lipid anchor (GPI-like-anchor amidated alanine) is attached at alanine 419. Residues 420 to 452 (AAGLTVPSLTMAPVVVGAVTLLSTVFGAGLVLL) constitute a propeptide, removed in mature form.

Belongs to the glycosyl hydrolase 72 family. Post-translationally, the GPI-like anchor contains a phosphoceramide lipid group. The anchor position has not been determined.

The protein resides in the cell membrane. Splits internally a 1,3-beta-glucan molecule and transfers the newly generated reducing end (the donor) to the non-reducing end of another 1,3-beta-glucan molecule (the acceptor) forming a 1,3-beta linkage, resulting in the elongation of 1,3-beta-glucan chains in the cell wall. Involved in cell wall morphogenesis. The protein is 1,3-beta-glucanosyltransferase gel1 (gel1) of Aspergillus fumigatus (strain CBS 144.89 / FGSC A1163 / CEA10) (Neosartorya fumigata).